The following is a 274-amino-acid chain: Aliphatic sulfonates import ATP-binding protein SsuB 2 (274 aa).

The ABC transporter domain maps to 21-242; sequence LALRGVARRF…SRGSARLAAL (222 aa). 53–60 contacts ATP; sequence GRSGCGKS.

Belongs to the ABC transporter superfamily. Aliphatic sulfonates importer (TC 3.A.1.17.2) family. As to quaternary structure, the complex is composed of two ATP-binding proteins (SsuB), two transmembrane proteins (SsuC) and a solute-binding protein (SsuA).

It is found in the cell inner membrane. It catalyses the reaction ATP + H2O + aliphatic sulfonate-[sulfonate-binding protein]Side 1 = ADP + phosphate + aliphatic sulfonateSide 2 + [sulfonate-binding protein]Side 1.. Functionally, part of the ABC transporter complex SsuABC involved in aliphatic sulfonates import. Responsible for energy coupling to the transport system. This chain is Aliphatic sulfonates import ATP-binding protein SsuB 2, found in Pseudomonas aeruginosa (strain UCBPP-PA14).